The following is a 210-amino-acid chain: Large ribosomal subunit protein uL3 (210 aa).

The segment at 126–152 (HGFRGGPKTHGQSDRHRAPGSIGAGTT) is disordered.

The protein belongs to the universal ribosomal protein uL3 family. Part of the 50S ribosomal subunit. Forms a cluster with proteins L14 and L19.

One of the primary rRNA binding proteins, it binds directly near the 3'-end of the 23S rRNA, where it nucleates assembly of the 50S subunit. This chain is Large ribosomal subunit protein uL3, found in Chloroflexus aurantiacus (strain ATCC 29366 / DSM 635 / J-10-fl).